Here is a 198-residue protein sequence, read N- to C-terminus: 7-methyl-GTP pyrophosphatase (198 aa).

Asp-69 acts as the Proton acceptor in catalysis.

The protein belongs to the Maf family. YceF subfamily. It depends on a divalent metal cation as a cofactor.

The protein localises to the cytoplasm. It carries out the reaction N(7)-methyl-GTP + H2O = N(7)-methyl-GMP + diphosphate + H(+). Functionally, nucleoside triphosphate pyrophosphatase that hydrolyzes 7-methyl-GTP (m(7)GTP). May have a dual role in cell division arrest and in preventing the incorporation of modified nucleotides into cellular nucleic acids. The sequence is that of 7-methyl-GTP pyrophosphatase from Yersinia pestis bv. Antiqua (strain Antiqua).